The primary structure comprises 256 residues: Type III pantothenate kinase (256 aa).

6-13 (DVGNSHIY) serves as a coordination point for ATP. Substrate is bound by residues Tyr99 and 106–109 (GADR). The Proton acceptor role is filled by Asp108. Asp129 is a binding site for K(+). Residue Thr132 participates in ATP binding. Thr184 serves as a coordination point for substrate.

Belongs to the type III pantothenate kinase family. Homodimer. It depends on NH4(+) as a cofactor. K(+) is required as a cofactor.

It localises to the cytoplasm. The enzyme catalyses (R)-pantothenate + ATP = (R)-4'-phosphopantothenate + ADP + H(+). The protein operates within cofactor biosynthesis; coenzyme A biosynthesis; CoA from (R)-pantothenate: step 1/5. Its function is as follows. Catalyzes the phosphorylation of pantothenate (Pan), the first step in CoA biosynthesis. The sequence is that of Type III pantothenate kinase from Legionella pneumophila (strain Corby).